We begin with the raw amino-acid sequence, 278 residues long: Elongation factor Ts (278 aa).

Positions 79-82 (TDFV) are involved in Mg(2+) ion dislocation from EF-Tu.

This sequence belongs to the EF-Ts family.

It is found in the cytoplasm. Associates with the EF-Tu.GDP complex and induces the exchange of GDP to GTP. It remains bound to the aminoacyl-tRNA.EF-Tu.GTP complex up to the GTP hydrolysis stage on the ribosome. The sequence is that of Elongation factor Ts from Borrelia recurrentis (strain A1).